The following is a 79-amino-acid chain: Gas vesicle protein A2 (79 aa).

The interval 9-19 is alpha helix 1; the sequence is LAEVLDRVLDK. The segment at 23–31 is beta-strand 1; that stretch reads VDVWARISL. A beta turn region spans residues 32 to 34; it reads VGI. The interval 35–43 is beta-strand 2; it reads EILTVEARV. The segment at 48–67 is alpha helix 2; the sequence is VDTFLHYAEEIAKIEQAELT.

Belongs to the gas vesicle GvpA family. The gas vesicle shell is 2 nm thick and consists of a single layer of this protein. It forms helical ribs nearly perpendicular to the long axis of the vesicle.

Its subcellular location is the gas vesicle shell. In terms of biological role, gas vesicles are hollow, gas filled proteinaceous nanostructures found in several microbial planktonic microorganisms. They allow positioning of halobacteria at the optimal depth for growth in the poorly aerated shallow brine pools of their habitat. GvpA forms the gas vesicle shell. This protein can replace the p-gvpA gene in the p-vac locus and increases the critical collapse pressure (CCP) of hybrid gas vesicles from 0.66 MPa to 0.90 MPa. In stationary phase gas vesicles about 30 times more GvpA1 is found than GvpA2. Functionally, expression of 2 c-vac DNA fragments containing 2 divergently transcribed regions (gvpE-gvpF-gvpG-gvpH-gvpI-gvpJ-gvpK-gvpL-gvpM and gvpA-gvpC-gvpN-gvpO) allows H.volcanii to produce gas vesicles. All site-directed mutagenesis is tested in H.volcanii. The chain is Gas vesicle protein A2 from Halobacterium salinarum (strain ATCC 700922 / JCM 11081 / NRC-1) (Halobacterium halobium).